We begin with the raw amino-acid sequence, 216 residues long: 3-keto-L-gulonate-6-phosphate decarboxylase UlaD (216 aa).

Residue Asp11 participates in substrate binding. The Mg(2+) site is built by Glu33 and Asp62. Position 192 (Arg192) interacts with substrate.

The protein belongs to the HPS/KGPDC family. KGPDC subfamily. Homodimer. The cofactor is Mg(2+).

It carries out the reaction 3-dehydro-L-gulonate 6-phosphate + H(+) = L-xylulose 5-phosphate + CO2. It functions in the pathway cofactor degradation; L-ascorbate degradation; D-xylulose 5-phosphate from L-ascorbate: step 2/4. Catalyzes the decarboxylation of 3-keto-L-gulonate-6-P into L-xylulose-5-P. Is involved in the anaerobic L-ascorbate utilization. This chain is 3-keto-L-gulonate-6-phosphate decarboxylase UlaD, found in Shigella dysenteriae serotype 1 (strain Sd197).